The sequence spans 181 residues: Protein Syd (181 aa).

It belongs to the Syd family.

Its subcellular location is the cell inner membrane. Interacts with the SecY protein in vivo. May bind preferentially to an uncomplexed state of SecY, thus functioning either as a chelating agent for excess SecY in the cell or as a regulatory factor that negatively controls the translocase function. In Klebsiella pneumoniae (strain 342), this protein is Protein Syd.